The primary structure comprises 968 residues: Phosphoenolpyruvate carboxylase 3 (968 aa).

Ser-11 is modified (phosphoserine). Residues His-173 and Lys-603 contribute to the active site. Ser-705 carries the post-translational modification Phosphoserine.

Belongs to the PEPCase type 1 family. As to quaternary structure, homotetramer. Mg(2+) serves as cofactor. As to expression, expressed in roots and siliques, and to a lower extent in stems, leaves and flowers.

It is found in the cytoplasm. It carries out the reaction oxaloacetate + phosphate = phosphoenolpyruvate + hydrogencarbonate. By light-reversible phosphorylation. Through the carboxylation of phosphoenolpyruvate (PEP) it forms oxaloacetate, a four-carbon dicarboxylic acid source for the tricarboxylic acid cycle. In Arabidopsis thaliana (Mouse-ear cress), this protein is Phosphoenolpyruvate carboxylase 3 (PPC3).